The following is a 433-amino-acid chain: MFTRLITTSALTGAIALTIGSQAFAQTELAWWHGMTGANNEMVNELSKEFNESQSEYKIVPVYKGNYPETLNAGIAAFRSKQPPAILQVFDAGSGVMMAAEGAIVPAAEVLEKGGYKFDKSQYLPGIVAYYSKPDGTMLSFPYNSSSPILYYNKDAFKKAGLDENKPPKTWPEVFEAAKKIKASGASPCGFTSTWLTWIQTENFAAWNNVPYGTNENGLAGTDVKLEINSPLYVEHFQAIADLAKDGTFRYGGRTSEAKQLFTSGECAMLTESSGGLGDVVKSGINYGIGQLPYYEGHGPQNTIPGGASLWVFAGLSDDQYKGIAEFFNFLSQSKIQVKLHEKSGYLPVTLAAYEETKKSDFYEKNPGRETPILQMMGKEPTENSKGVRLVNLPQVRDILNEEFEAMLGGKQDAKTALDNAVKRGNAAIAAAQ.

An N-terminal signal peptide occupies residues 1 to 25 (MFTRLITTSALTGAIALTIGSQAFA). The sn-glycerol 3-phosphate site is built by Tyr-67, Asp-91, Ser-146, Ser-273, Gly-307, Tyr-346, and Arg-397.

It belongs to the bacterial solute-binding protein 1 family. As to quaternary structure, the complex is composed of two ATP-binding proteins (UgpC), two transmembrane proteins (UgpA and UgpE) and a solute-binding protein (UgpB).

The protein localises to the periplasm. Its function is as follows. Part of the ABC transporter complex UgpBAEC involved in sn-glycerol-3-phosphate (G3P) import. Binds G3P. The sequence is that of sn-glycerol-3-phosphate-binding periplasmic protein UgpB (ugpB) from Brucella melitensis biotype 1 (strain ATCC 23456 / CCUG 17765 / NCTC 10094 / 16M).